Consider the following 671-residue polypeptide: DNA ligase (671 aa).

NAD(+)-binding positions include 32 to 36 (DAEYD), 81 to 82 (SL), and Glu-113. Residue Lys-115 is the N6-AMP-lysine intermediate of the active site. Residues Arg-136, Glu-173, Lys-290, and Lys-314 each coordinate NAD(+). Zn(2+) is bound by residues Cys-408, Cys-411, Cys-426, and Cys-432. The BRCT domain maps to 593–671 (EIDSPFAGKT…EAEMLRLLGS (79 aa)).

Belongs to the NAD-dependent DNA ligase family. LigA subfamily. Mg(2+) serves as cofactor. Requires Mn(2+) as cofactor.

The catalysed reaction is NAD(+) + (deoxyribonucleotide)n-3'-hydroxyl + 5'-phospho-(deoxyribonucleotide)m = (deoxyribonucleotide)n+m + AMP + beta-nicotinamide D-nucleotide.. DNA ligase that catalyzes the formation of phosphodiester linkages between 5'-phosphoryl and 3'-hydroxyl groups in double-stranded DNA using NAD as a coenzyme and as the energy source for the reaction. It is essential for DNA replication and repair of damaged DNA. The sequence is that of DNA ligase from Shigella boydii serotype 4 (strain Sb227).